The chain runs to 326 residues: Aspartate carbamoyltransferase catalytic subunit (326 aa).

The carbamoyl phosphate site is built by R58 and T59. K86 contributes to the L-aspartate binding site. Carbamoyl phosphate contacts are provided by R108, H141, and Q144. L-aspartate contacts are provided by R181 and R239. Residues G280 and P281 each coordinate carbamoyl phosphate.

This sequence belongs to the aspartate/ornithine carbamoyltransferase superfamily. ATCase family. As to quaternary structure, heterododecamer (2C3:3R2) of six catalytic PyrB chains organized as two trimers (C3), and six regulatory PyrI chains organized as three dimers (R2).

The enzyme catalyses carbamoyl phosphate + L-aspartate = N-carbamoyl-L-aspartate + phosphate + H(+). Its pathway is pyrimidine metabolism; UMP biosynthesis via de novo pathway; (S)-dihydroorotate from bicarbonate: step 2/3. Functionally, catalyzes the condensation of carbamoyl phosphate and aspartate to form carbamoyl aspartate and inorganic phosphate, the committed step in the de novo pyrimidine nucleotide biosynthesis pathway. The protein is Aspartate carbamoyltransferase catalytic subunit of Synechococcus sp. (strain JA-3-3Ab) (Cyanobacteria bacterium Yellowstone A-Prime).